The sequence spans 177 residues: uncharacterized protein (177 aa).

This is an uncharacterized protein from Treponema pallidum (strain Nichols).